A 903-amino-acid polypeptide reads, in one-letter code: Alanine--tRNA ligase (903 aa).

Zn(2+) is bound by residues histidine 581, histidine 585, cysteine 693, and histidine 697.

Belongs to the class-II aminoacyl-tRNA synthetase family. Zn(2+) serves as cofactor.

Its subcellular location is the cytoplasm. The catalysed reaction is tRNA(Ala) + L-alanine + ATP = L-alanyl-tRNA(Ala) + AMP + diphosphate. In terms of biological role, catalyzes the attachment of alanine to tRNA(Ala) in a two-step reaction: alanine is first activated by ATP to form Ala-AMP and then transferred to the acceptor end of tRNA(Ala). Also edits incorrectly charged Ser-tRNA(Ala) and Gly-tRNA(Ala) via its editing domain. The polypeptide is Alanine--tRNA ligase (Psychrobacter sp. (strain PRwf-1)).